The following is a 530-amino-acid chain: Trigger factor (530 aa).

Residues 162–243 form the PPIase FKBP-type domain; sequence DDLVTIDLAG…VTKVCEQELP (82 aa). The segment at 432-530 is disordered; the sequence is NALELDRIQP…KTAAKDDKSK (99 aa). 2 stretches are compositionally biased toward basic and acidic residues: residues 459–478 and 501–512; these read SAEKADGKATEESKAEEKAP and KVVDAKSDDKPA.

This sequence belongs to the FKBP-type PPIase family. Tig subfamily.

The protein resides in the cytoplasm. It catalyses the reaction [protein]-peptidylproline (omega=180) = [protein]-peptidylproline (omega=0). Its function is as follows. Involved in protein export. Acts as a chaperone by maintaining the newly synthesized protein in an open conformation. Functions as a peptidyl-prolyl cis-trans isomerase. In Cutibacterium acnes (strain DSM 16379 / KPA171202) (Propionibacterium acnes), this protein is Trigger factor.